The following is a 215-amino-acid chain: Variable small protein 6 (215 aa).

The signal sequence occupies residues 1–18; that stretch reads MRKRISAIIMTLFMVFMS. Residue Cys-19 is the site of N-palmitoyl cysteine attachment. Cys-19 is lipidated: S-diacylglycerol cysteine.

This sequence belongs to the variable small protein (Vsp) family.

It localises to the cell outer membrane. In terms of biological role, the Vlp and Vsp proteins are antigenically distinct proteins, only one vlp or vsp gene is transcriptionally active at any one time. Switching between these genes is a mechanism of host immune response evasion. The polypeptide is Variable small protein 6 (Borrelia hermsii).